A 576-amino-acid polypeptide reads, in one-letter code: Sulfite reductase [NADPH] hemoprotein beta-component (576 aa).

The [4Fe-4S] cluster site is built by Cys-435, Cys-441, Cys-480, and Cys-484. Cys-484 provides a ligand contact to siroheme.

The protein belongs to the nitrite and sulfite reductase 4Fe-4S domain family. In terms of assembly, alpha(8)-beta(8). The alpha component is a flavoprotein, the beta component is a hemoprotein. Siroheme is required as a cofactor. The cofactor is [4Fe-4S] cluster.

It catalyses the reaction hydrogen sulfide + 3 NADP(+) + 3 H2O = sulfite + 3 NADPH + 4 H(+). Its pathway is sulfur metabolism; hydrogen sulfide biosynthesis; hydrogen sulfide from sulfite (NADPH route): step 1/1. Component of the sulfite reductase complex that catalyzes the 6-electron reduction of sulfite to sulfide. This is one of several activities required for the biosynthesis of L-cysteine from sulfate. This is Sulfite reductase [NADPH] hemoprotein beta-component from Photorhabdus laumondii subsp. laumondii (strain DSM 15139 / CIP 105565 / TT01) (Photorhabdus luminescens subsp. laumondii).